We begin with the raw amino-acid sequence, 122 residues long: Ribonuclease P protein component (122 aa).

It belongs to the RnpA family. In terms of assembly, consists of a catalytic RNA component (M1 or rnpB) and a protein subunit.

The catalysed reaction is Endonucleolytic cleavage of RNA, removing 5'-extranucleotides from tRNA precursor.. In terms of biological role, RNaseP catalyzes the removal of the 5'-leader sequence from pre-tRNA to produce the mature 5'-terminus. It can also cleave other RNA substrates such as 4.5S RNA. The protein component plays an auxiliary but essential role in vivo by binding to the 5'-leader sequence and broadening the substrate specificity of the ribozyme. In Roseiflexus castenholzii (strain DSM 13941 / HLO8), this protein is Ribonuclease P protein component.